The following is a 955-amino-acid chain: MHPSTVRREAERVKVSVRVRPLNERENNAPEGTKVTVAAKQAAAVVTVKVLGGSNNSGAAESMGTARRVAQDFQFDHVFWSVETPDACGATPATQADVFRTIGYPLVQHAFDGFNSCLFAYGQTGSGKTYTMMGADVSALSGEGNGVTPRICLEIFARKASVEAQGHSRWIVELGYVEVYNERVSDLLGKRKKGVKGGGEEVYVDVREHPSRGVFLEGQRLVEVGSLDDVVRLIEIGNGVRHTASTKMNDRSSRSHAIIMLLLREERTMTTKSGETIRTAGKSSRMNLVDLAGSERVAQSQVEGQQFKEATHINLSLTTLGRVIDVLADMATKGAKAQYSVAPFRDSKLTFILKDSLGGNSKTFMIATVSPSALNYEETLSTLRYASRARDIVNVAQVNEDPRARRIRELEEQMEDMRQAMAGGDPAYVSELKKKLALLESEAQKRAADLQALEREREHNQVQERLLRATEAEKSELESRAAALQEEMTATRRQADKMQALNLRLKEEQARKERELLKEMAKKDAALSKVRRRKDAEIASEREKLESTVAQLEREQREREVALDALQTHQRKLQEALESSERTAAERDQLLQQLTELQSERTQLSQVVTDRERLTRDLQRIQYEYGETELARDVALCAAQEMEARYHAAVFHLQTLLELATEWEDALRERALAERDEAAAAELDAAASTSQNARESACERLTSLEQQLRESEERAAELASQLEATAAAKSSAEQDRENTRATLEQQLRESEARAAELASQLEATAAAKMSAEQDRENTRATLEQQLRDSEERAAELASQLESTTAAKMSAEQDRESTRATLEQQLRDSEERAAELASQLESTTAAKMSAEQDRESTRATLEQQLRESEERAAELASQLESTTAAKMSAEQDRESTRATLEQQLRDSEERAAELASQLEATAAAKSSAEQDRENTRAALEQQLRDSEERAAELASQ.

The 381-residue stretch at 12-392 (RVKVSVRVRP…LRYASRARDI (381 aa)) folds into the Kinesin motor domain. Position 122-129 (122-129 (GQTGSGKT)) interacts with ATP. Positions 426 to 955 (PAYVSELKKK…EERAAELASQ (530 aa)) form a coiled coil. 2 disordered regions span residues 682-712 (ELDAAASTSQNARESACERLTSLEQQLRESE) and 725-955 (TAAA…LASQ). 7 tandem repeats follow at residues 704 to 742 (LEQQLRESEERAAELASQLEATAAAKSSAEQDRENTRAT), 743 to 781 (LEQQLRESEARAAELASQLEATAAAKMSAEQDRENTRAT), 782 to 820 (LEQQLRDSEERAAELASQLESTTAAKMSAEQDRESTRAT), 821 to 859 (LEQQLRDSEERAAELASQLESTTAAKMSAEQDRESTRAT), 860 to 898 (LEQQLRESEERAAELASQLESTTAAKMSAEQDRESTRAT), 899 to 937 (LEQQLRDSEERAAELASQLEATAAAKSSAEQDRENTRAA), and 938 to 955 (LEQQLRDSEERAAELASQ). The tract at residues 704 to 955 (LEQQLRESEE…EERAAELASQ (252 aa)) is 7 X 39 AA approximate tandem repeats. Basic and acidic residues-rich tracts occupy residues 785-794 (QLRDSEERAA), 824-833 (QLRDSEERAA), 863-872 (QLRESEERAA), 902-911 (QLRDSEERAA), and 941-955 (QLRDSEERAAELASQ).

It belongs to the TRAFAC class myosin-kinesin ATPase superfamily. Kinesin family.

The protein localises to the cytoplasm. The protein resides in the cytoskeleton. This Leishmania chagasi protein is Kinesin-like protein K39 (KIN).